The chain runs to 296 residues: Haloalkane dehalogenase (296 aa).

Positions 31–155 constitute an AB hydrolase-1 domain; the sequence is PILFQHGNPT…QDRDLFQAFR (125 aa). Catalysis depends on Asp-108, which acts as the Nucleophile. The active-site Proton donor is the Glu-132. His-272 (proton acceptor) is an active-site residue.

The protein belongs to the haloalkane dehalogenase family. Type 2 subfamily. In terms of assembly, monomer.

It localises to the periplasm. The enzyme catalyses 1-haloalkane + H2O = a halide anion + a primary alcohol + H(+). The catalysed reaction is (3R,6R)-1,3,4,6-tetrachlorocyclohexa-1,4-diene + 2 H2O = 2,5-dichlorocyclohexa-2,5-dien-1,4-diol + 2 chloride + 2 H(+). It participates in xenobiotic degradation; gamma-hexachlorocyclohexane degradation. Catalyzes hydrolytic cleavage of carbon-halogen bonds in halogenated aliphatic compounds, leading to the formation of the corresponding primary alcohols, halide ions and protons. Is involved in the degradation of the important environmental pollutant gamma-hexachlorocyclohexane (gamma-HCH or lindane) as it also catalyzes conversion of 1,3,4,6-tetrachloro-1,4-cyclohexadiene (1,4-TCDN) to 2,5-dichloro-2,5-cyclohexadiene-1,4-diol (2,5-DDOL) via the intermediate 2,4,5-trichloro-2,5-cyclohexadiene-1-ol (2,4,5-DNOL). This Sphingobium indicum (strain DSM 16412 / CCM 7286 / MTCC 6364 / B90A) protein is Haloalkane dehalogenase.